The primary structure comprises 291 residues: MKRIALFLATNLAVMIVFSIVLNIVYAVTGIQQGSLSGLLVMAVLFGFGGSLVSLLMSKKMALRSVGGEVIEQPRNETEHWLMETVSRQAQQVGIGMPTVAIYDSPDMNAFATGAKRDDSLVAVSTGLLHNMTRDEAEAVLAHEVSHIANGDMITMTLMQGVVNTFVIFLSRMIANAVSGFTSNDEEGEGEGGSFMTYFIVSTVLEIAFGFLASFLTMWFSRHREFYADAGAANLVGKDKMIAALERLRMGQESQLEGSMMAFGINGKKSLTELLMSHPPLEKRINALRQL.

The next 2 membrane-spanning stretches (helical) occupy residues Ile-4 to Ile-24 and Leu-36 to Leu-56. His-143 is a binding site for Zn(2+). Glu-144 is a catalytic residue. Position 147 (His-147) interacts with Zn(2+). 2 helical membrane-spanning segments follow: residues Gly-151–Ser-171 and Phe-199–Trp-219. Position 225 (Glu-225) interacts with Zn(2+).

The protein belongs to the peptidase M48B family. The cofactor is Zn(2+).

It localises to the cell inner membrane. The protein is Protease HtpX of Aliivibrio salmonicida (strain LFI1238) (Vibrio salmonicida (strain LFI1238)).